The following is a 150-amino-acid chain: Large ribosomal subunit protein bL9 (150 aa).

Belongs to the bacterial ribosomal protein bL9 family.

Its function is as follows. Binds to the 23S rRNA. The polypeptide is Large ribosomal subunit protein bL9 (Neisseria meningitidis serogroup C / serotype 2a (strain ATCC 700532 / DSM 15464 / FAM18)).